Consider the following 489-residue polypeptide: Mitochondrial-processing peptidase subunit beta (489 aa).

The transit peptide at 1 to 45 (MAAAAVSRTLLPVAGRRLWGFTRRLPLRAAAAQPLYFGGDRLRST) directs the protein to the mitochondrion. Histidine 101 contributes to the Zn(2+) binding site. The active-site Proton acceptor is glutamate 104. The Zn(2+) site is built by histidine 105 and glutamate 181.

It belongs to the peptidase M16 family. As to quaternary structure, heterodimer of PMPCA (alpha) and PMPCB (beta) subunits, forming the mitochondrial processing protease (MPP) in which PMPCA is involved in substrate recognition and binding and PMPCB is the catalytic subunit. The cofactor is Zn(2+).

Its subcellular location is the mitochondrion matrix. The enzyme catalyses Release of N-terminal transit peptides from precursor proteins imported into the mitochondrion, typically with Arg in position P2.. With respect to regulation, binding to PMPCA is required for catalytic activity. Catalytic subunit of the essential mitochondrial processing protease (MPP), which cleaves the mitochondrial sequence off newly imported precursors proteins. Preferentially, cleaves after an arginine at position P2. Required for PINK1 turnover by coupling PINK1 mitochondrial import and cleavage, which results in subsequent PINK1 proteolysis. In Rattus norvegicus (Rat), this protein is Mitochondrial-processing peptidase subunit beta (Pmpcb).